Here is a 151-residue protein sequence, read N- to C-terminus: UPF0208 membrane protein PC1_2779 (151 aa).

Helical transmembrane passes span 46-66 (FGIRIMPPLAVFTLTWQIALG) and 69-89 (LGPAIATALFACSLPLQGLWW).

Belongs to the UPF0208 family.

Its subcellular location is the cell inner membrane. This is UPF0208 membrane protein PC1_2779 from Pectobacterium carotovorum subsp. carotovorum (strain PC1).